A 708-amino-acid chain; its full sequence is Caprin-1 (708 aa).

2 stretches are compositionally biased toward low complexity: residues 1-15 and 22-37; these read MPSATSHSGSGSKSS and GSSGNEAGAGAAAPAS. The tract at residues 1–48 is disordered; the sequence is MPSATSHSGSGSKSSGPPPPSGSSGNEAGAGAAAPASQHPMTGTGAVQ. Proline 2 is subject to N-acetylproline. Position 10 is a phosphoserine (serine 10). Positions 58 to 92 form a coiled coil; it reads VIDKKLRNLEKKKGKLDDYQERMNKGERLNQDQLD. Position 113 is a phosphoserine (serine 113). Positions 123-151 form a coiled coil; that stretch reads KTIKKTARREQLMREEAEQKRLKTVLELQ. Arginine 163 bears the Omega-N-methylarginine mark. Residues 258 to 287 are disordered; it reads EEAASAPTVEDQAAEAEPEPVEEYTEQNEV. The segment covering 269–287 has biased composition (acidic residues); that stretch reads QAAEAEPEPVEEYTEQNEV. Serine 333 and serine 341 each carry phosphoserine. The segment at 358-379 is G3BP1-binding; it reads QDLMAQMQGPYNFIQDSMLDFE. The span at 415 to 452 shows a compositional bias: polar residues; the sequence is LAQPNQVSVQPEATQVPLVSSTSEGYTASQPLYQPSHA. Disordered regions lie at residues 415–459, 473–497, 521–559, and 571–708; these read LAQP…RPQK, TDQTTASSSLPAASQPQVFQAGTSK, NAPVPPVNEPETLKQQNQYQASYNQSFSSQPHQVEQTEL, and YHGS…QQVN. Composition is skewed to low complexity over residues 475 to 489 and 535 to 559; these read QTTASSSLPAASQPQ and QQNQYQASYNQSFSSQPHQVEQTEL. The segment covering 572–603 has biased composition (polar residues); sequence HGSQDQPHQVTGNHQQPPQQNTGFPRSNQPYY. Tyrosine 623 is modified (phosphotyrosine). Omega-N-methylarginine occurs at positions 624 and 631. Phosphotyrosine is present on residues tyrosine 634 and tyrosine 637. Omega-N-methylarginine is present on arginine 638. Over residues 640–656 the composition is skewed to polar residues; the sequence is SFSTNTPNSGYTQSQFS. O-linked (GlcNAc) serine glycans are attached at residues serine 642 and serine 648. Tyrosine 650, tyrosine 661, tyrosine 664, and tyrosine 669 each carry phosphotyrosine. Low complexity-rich tracts occupy residues 675 to 685 and 696 to 708; these read RGSGQSGPRGA and NRGMPQMNTQQVN. An Asymmetric dimethylarginine; alternate modification is found at arginine 697. Arginine 697 is subject to Omega-N-methylarginine; alternate.

This sequence belongs to the caprin family. In terms of assembly, may form homomultimers. Interacts with G3BP1; interaction is direct and promotes stress granule formation. Interacts with G3BP2; interaction is direct and promotes stress granule formation. Interacts with PQBP1. Interacts with DDX3X. Interacts (when phosphorylated by EPHA4) with FMR1; interaction with FMR1 promotes formation of a membraneless compartment. Post-translationally, tyrosine phosphorylation by EPHA4 promotes interaction with FMR1 and liquid-liquid phase separation (LLPS) for the formation of a membraneless compartment that concentrates mRNAs with associated regulatory factors. In terms of processing, O-glycosylated (O-GlcNAcylated), in a cell cycle-dependent manner. O-glycosylation by OGT inhibit ability to undergo liquid-liquid phase separation (LLPS).

The protein localises to the cytoplasm. It is found in the cytoplasmic ribonucleoprotein granule. The protein resides in the cytosol. Its subcellular location is the cell projection. It localises to the dendrite. The protein localises to the lamellipodium. Its activity is regulated as follows. Ability to mediate liquid-liquid phase separation is regulated by ATP: moderate concentrations of ATP enhance phase separation, whereas high concentrations of ATP lead to inhibition of phase separation. Its function is as follows. mRNA-binding protein that acts as a regulator of mRNAs transport, translation and/or stability, and which is involved in neurogenesis, synaptic plasticity in neurons and cell proliferation and migration in multiple cell types. Plays an essential role in cytoplasmic stress granule formation. Acts as an mRNA regulator by mediating formation of some phase-separated membraneless compartment: undergoes liquid-liquid phase separation upon binding to target mRNAs, leading to assemble mRNAs into cytoplasmic ribonucleoprotein granules that concentrate mRNAs with associated regulatory factors. Undergoes liquid-liquid phase separation following phosphorylation and interaction with FMR1, promoting formation of cytoplasmic ribonucleoprotein granules that concentrate mRNAs with factors that inhibit translation and mediate deadenylation of target mRNAs. In these cytoplasmic ribonucleoprotein granules, CAPRIN1 mediates recruitment of CNOT7 deadenylase, leading to mRNA deadenylation and degradation. Binds directly and selectively to MYC and CCND2 mRNAs. In neuronal cells, directly binds to several mRNAs associated with RNA granules, including BDNF, CAMK2A, CREB1, MAP2, NTRK2 mRNAs, as well as to GRIN1 and KPNB1 mRNAs, but not to rRNAs. The chain is Caprin-1 (CAPRIN1) from Bos taurus (Bovine).